The following is a 579-amino-acid chain: Tetratricopeptide repeat protein 39C (579 aa).

Residues glutamine 182–threonine 197 show a composition bias toward polar residues. Positions glutamine 182–arginine 202 are disordered. TPR repeat units lie at residues serine 311–glutamine 344, histidine 349–serine 382, and glycine 481–arginine 514.

This sequence belongs to the TTC39 family.

This Danio rerio (Zebrafish) protein is Tetratricopeptide repeat protein 39C (ttc39c).